A 245-amino-acid chain; its full sequence is UPF0319 protein VV0984 (245 aa).

Residues 1–20 (MRYIGKWMMLGALVSSSVFA) form the signal peptide.

This sequence belongs to the UPF0319 family.

This chain is UPF0319 protein VV0984, found in Vibrio vulnificus (strain YJ016).